The following is a 335-amino-acid chain: PA-phosphatase related-family protein DDB_G0275547 (335 aa).

Helical transmembrane passes span 43-63 (VMYL…GILF), 93-113 (VLIP…SLIV), 124-144 (ILGL…FKCF), 202-222 (SITA…FKIF), 226-246 (GHIF…LIGI), and 254-274 (HTFL…LSCY).

Belongs to the PA-phosphatase related phosphoesterase family.

It is found in the membrane. In Dictyostelium discoideum (Social amoeba), this protein is PA-phosphatase related-family protein DDB_G0275547.